The chain runs to 739 residues: Phosphoribosylformylglycinamidine synthase subunit PurL (739 aa).

The active site involves His-52. ATP contacts are provided by Tyr-55 and Lys-94. Glu-96 is a binding site for Mg(2+). Residues 97–100 (SHNH) and Arg-119 contribute to the substrate site. Residue His-98 is the Proton acceptor of the active site. A Mg(2+)-binding site is contributed by Asp-120. Gln-243 provides a ligand contact to substrate. Asp-271 is a Mg(2+) binding site. 315 to 317 (ESQ) lines the substrate pocket. Residues Asp-498 and Gly-535 each contribute to the ATP site. Asn-536 lines the Mg(2+) pocket. Ser-538 provides a ligand contact to substrate.

This sequence belongs to the FGAMS family. As to quaternary structure, monomer. Part of the FGAM synthase complex composed of 1 PurL, 1 PurQ and 2 PurS subunits.

It localises to the cytoplasm. It carries out the reaction N(2)-formyl-N(1)-(5-phospho-beta-D-ribosyl)glycinamide + L-glutamine + ATP + H2O = 2-formamido-N(1)-(5-O-phospho-beta-D-ribosyl)acetamidine + L-glutamate + ADP + phosphate + H(+). Its pathway is purine metabolism; IMP biosynthesis via de novo pathway; 5-amino-1-(5-phospho-D-ribosyl)imidazole from N(2)-formyl-N(1)-(5-phospho-D-ribosyl)glycinamide: step 1/2. Part of the phosphoribosylformylglycinamidine synthase complex involved in the purines biosynthetic pathway. Catalyzes the ATP-dependent conversion of formylglycinamide ribonucleotide (FGAR) and glutamine to yield formylglycinamidine ribonucleotide (FGAM) and glutamate. The FGAM synthase complex is composed of three subunits. PurQ produces an ammonia molecule by converting glutamine to glutamate. PurL transfers the ammonia molecule to FGAR to form FGAM in an ATP-dependent manner. PurS interacts with PurQ and PurL and is thought to assist in the transfer of the ammonia molecule from PurQ to PurL. This chain is Phosphoribosylformylglycinamidine synthase subunit PurL, found in Caulobacter vibrioides (strain ATCC 19089 / CIP 103742 / CB 15) (Caulobacter crescentus).